The primary structure comprises 370 residues: Queuine tRNA-ribosyltransferase (370 aa).

The Proton acceptor role is filled by D89. Substrate contacts are provided by residues 89 to 93 (DSGGF), D143, Q185, and G212. The segment at 243 to 249 (GVGKPED) is RNA binding. D262 serves as the catalytic Nucleophile. The tract at residues 267–271 (TRNAR) is RNA binding; important for wobble base 34 recognition. Zn(2+) is bound by residues C300, C302, C305, and H331.

It belongs to the queuine tRNA-ribosyltransferase family. In terms of assembly, homodimer. Within each dimer, one monomer is responsible for RNA recognition and catalysis, while the other monomer binds to the replacement base PreQ1. Zn(2+) is required as a cofactor.

The enzyme catalyses 7-aminomethyl-7-carbaguanine + guanosine(34) in tRNA = 7-aminomethyl-7-carbaguanosine(34) in tRNA + guanine. The protein operates within tRNA modification; tRNA-queuosine biosynthesis. Catalyzes the base-exchange of a guanine (G) residue with the queuine precursor 7-aminomethyl-7-deazaguanine (PreQ1) at position 34 (anticodon wobble position) in tRNAs with GU(N) anticodons (tRNA-Asp, -Asn, -His and -Tyr). Catalysis occurs through a double-displacement mechanism. The nucleophile active site attacks the C1' of nucleotide 34 to detach the guanine base from the RNA, forming a covalent enzyme-RNA intermediate. The proton acceptor active site deprotonates the incoming PreQ1, allowing a nucleophilic attack on the C1' of the ribose to form the product. After dissociation, two additional enzymatic reactions on the tRNA convert PreQ1 to queuine (Q), resulting in the hypermodified nucleoside queuosine (7-(((4,5-cis-dihydroxy-2-cyclopenten-1-yl)amino)methyl)-7-deazaguanosine). This Pseudoalteromonas atlantica (strain T6c / ATCC BAA-1087) protein is Queuine tRNA-ribosyltransferase.